Reading from the N-terminus, the 172-residue chain is Ribosome maturation factor RimM (172 aa).

The PRC barrel domain maps to 93-167 (DEHEFYYHEI…RVVITPIPGM (75 aa)).

It belongs to the RimM family. As to quaternary structure, binds ribosomal protein uS19.

Its subcellular location is the cytoplasm. Functionally, an accessory protein needed during the final step in the assembly of 30S ribosomal subunit, possibly for assembly of the head region. Essential for efficient processing of 16S rRNA. May be needed both before and after RbfA during the maturation of 16S rRNA. It has affinity for free ribosomal 30S subunits but not for 70S ribosomes. The protein is Ribosome maturation factor RimM of Exiguobacterium sp. (strain ATCC BAA-1283 / AT1b).